The primary structure comprises 89 residues: Small ribosomal subunit protein bS18 (89 aa).

The segment covering 1–15 (MTTANTNETAAAAAA) has biased composition (low complexity). The segment at 1-22 (MTTANTNETAAAAAAKNRRNKK) is disordered.

It belongs to the bacterial ribosomal protein bS18 family. Part of the 30S ribosomal subunit. Forms a tight heterodimer with protein bS6.

Its function is as follows. Binds as a heterodimer with protein bS6 to the central domain of the 16S rRNA, where it helps stabilize the platform of the 30S subunit. The polypeptide is Small ribosomal subunit protein bS18 (Caldanaerobacter subterraneus subsp. tengcongensis (strain DSM 15242 / JCM 11007 / NBRC 100824 / MB4) (Thermoanaerobacter tengcongensis)).